Consider the following 329-residue polypeptide: Ketol-acid reductoisomerase (NADP(+)) (329 aa).

A KARI N-terminal Rossmann domain is found at 2–182; that stretch reads TQLFYDTDAD…GGTRAGILET (181 aa). Residues 25–28, S51, S53, and 83–86 each bind NADP(+); these read YGSQ and DEFQ. The active site involves H108. G134 is an NADP(+) binding site. The KARI C-terminal knotted domain maps to 183 to 328; the sequence is NFKEETETDL…KGLRSMFSWL (146 aa). D191, E195, E227, and E231 together coordinate Mg(2+). A substrate-binding site is contributed by S252.

The protein belongs to the ketol-acid reductoisomerase family. The cofactor is Mg(2+).

The enzyme catalyses (2R)-2,3-dihydroxy-3-methylbutanoate + NADP(+) = (2S)-2-acetolactate + NADPH + H(+). The catalysed reaction is (2R,3R)-2,3-dihydroxy-3-methylpentanoate + NADP(+) = (S)-2-ethyl-2-hydroxy-3-oxobutanoate + NADPH + H(+). Its pathway is amino-acid biosynthesis; L-isoleucine biosynthesis; L-isoleucine from 2-oxobutanoate: step 2/4. It functions in the pathway amino-acid biosynthesis; L-valine biosynthesis; L-valine from pyruvate: step 2/4. Functionally, involved in the biosynthesis of branched-chain amino acids (BCAA). Catalyzes an alkyl-migration followed by a ketol-acid reduction of (S)-2-acetolactate (S2AL) to yield (R)-2,3-dihydroxy-isovalerate. In the isomerase reaction, S2AL is rearranged via a Mg-dependent methyl migration to produce 3-hydroxy-3-methyl-2-ketobutyrate (HMKB). In the reductase reaction, this 2-ketoacid undergoes a metal-dependent reduction by NADPH to yield (R)-2,3-dihydroxy-isovalerate. The protein is Ketol-acid reductoisomerase (NADP(+)) of Prochlorococcus marinus (strain AS9601).